We begin with the raw amino-acid sequence, 313 residues long: uncharacterized protein (313 aa).

This sequence to B.subtilis YqxC and T.hyodysenteriae hemolysin TlyA.

This is an uncharacterized protein from Bacillus subtilis (strain 168).